A 125-amino-acid polypeptide reads, in one-letter code: Ribosome-binding factor A (125 aa).

The protein belongs to the RbfA family. As to quaternary structure, monomer. Binds 30S ribosomal subunits, but not 50S ribosomal subunits or 70S ribosomes.

The protein localises to the cytoplasm. In terms of biological role, one of several proteins that assist in the late maturation steps of the functional core of the 30S ribosomal subunit. Associates with free 30S ribosomal subunits (but not with 30S subunits that are part of 70S ribosomes or polysomes). Required for efficient processing of 16S rRNA. May interact with the 5'-terminal helix region of 16S rRNA. In Acidovorax sp. (strain JS42), this protein is Ribosome-binding factor A.